Consider the following 107-residue polypeptide: Parvalbumin beta 2 (107 aa).

Ser-1 is modified (N-acetylserine). EF-hand domains are found at residues 37–72 (XSPDDLKKXXXXLDQDKSGFLEEDELKLFLQNFSAS) and 89–107 (DADGDGMLGLDEFAVLVKQ). The Ca(2+) site is built by Asp-50, Asp-52, Ser-54, Phe-56, Glu-58, Glu-61, Asp-89, Asp-91, Asp-93, Met-95, and Glu-100.

It belongs to the parvalbumin family.

In muscle, parvalbumin is thought to be involved in relaxation after contraction. It binds two calcium ions. The protein is Parvalbumin beta 2 of Oncorhynchus mykiss (Rainbow trout).